Reading from the N-terminus, the 418-residue chain is Serine--tRNA ligase (418 aa).

231–233 contributes to the L-serine binding site; that stretch reads TAE. 262–264 is a binding site for ATP; that stretch reads RSE. Glutamate 285 lines the L-serine pocket. 349 to 352 contacts ATP; the sequence is EISS. Serine 385 provides a ligand contact to L-serine.

Belongs to the class-II aminoacyl-tRNA synthetase family. Type-1 seryl-tRNA synthetase subfamily. In terms of assembly, homodimer. The tRNA molecule binds across the dimer.

It localises to the cytoplasm. The enzyme catalyses tRNA(Ser) + L-serine + ATP = L-seryl-tRNA(Ser) + AMP + diphosphate + H(+). It carries out the reaction tRNA(Sec) + L-serine + ATP = L-seryl-tRNA(Sec) + AMP + diphosphate + H(+). It functions in the pathway aminoacyl-tRNA biosynthesis; selenocysteinyl-tRNA(Sec) biosynthesis; L-seryl-tRNA(Sec) from L-serine and tRNA(Sec): step 1/1. Functionally, catalyzes the attachment of serine to tRNA(Ser). Is also able to aminoacylate tRNA(Sec) with serine, to form the misacylated tRNA L-seryl-tRNA(Sec), which will be further converted into selenocysteinyl-tRNA(Sec). In Ureaplasma parvum serovar 3 (strain ATCC 27815 / 27 / NCTC 11736), this protein is Serine--tRNA ligase.